The following is a 1236-amino-acid chain: Chitinase-like protein PB1E7.04c (1236 aa).

Residues 1–19 (MRLISSLLLLVYSARLALS) form the signal peptide. Residues Asn-21, Asn-24, Asn-54, Asn-123, Asn-225, Asn-237, Asn-255, Asn-267, Asn-277, Asn-288, and Asn-309 are each glycosylated (N-linked (GlcNAc...) asparagine). Residues 26 to 325 (TAVLGYWGSN…EAIHKILDTK (300 aa)) enclose the GH18 domain. 3 disordered regions span residues 326–367 (SKHS…TSSA), 449–497 (VSSI…QSTL), and 584–625 (TSSP…STIL). A compositionally biased stretch (polar residues) spans 339–351 (QGLESTSSIALNP). A compositionally biased stretch (low complexity) spans 352 to 367 (TSSISSTSSSSSTSSA). N-linked (GlcNAc...) asparagine glycans are attached at residues Asn-715, Asn-737, Asn-768, Asn-786, and Asn-813. Disordered regions lie at residues 804–836 (ISTS…LAAN), 868–927 (TTAL…TSSS), 946–979 (TPTS…SSIA), and 1125–1159 (AASG…TPSN). Over residues 810 to 821 (NEYNTSFHAPTV) the composition is skewed to polar residues. Low complexity predominate over residues 822-832 (SSTTSSSSTTS). A compositionally biased stretch (low complexity) spans 1125 to 1156 (AASGSSTVTSSATASSSSSAATTADSSVTTDT).

The protein belongs to the glycosyl hydrolase 18 family. Chitinase class III subfamily.

It is found in the secreted. The protein is Chitinase-like protein PB1E7.04c of Schizosaccharomyces pombe (strain 972 / ATCC 24843) (Fission yeast).